An 884-amino-acid chain; its full sequence is Androgen receptor (884 aa).

Residues Met-1–Lys-522 form a modulating region. The tract at residues Met-1 to Ala-551 is interaction with ZNF318. Disordered regions lie at residues Val-33–Leu-145 and Gln-174–Gly-207. Composition is skewed to low complexity over residues Gln-55–Gln-79 and Gln-174–Ala-196. Ser-61 is subject to Phosphoserine; by CDK9. Ser-75 carries the post-translational modification Phosphoserine. A compositionally biased stretch (polar residues) spans Pro-197–Gly-207. Tyr-204 carries the phosphotyrosine; by CSK modification. Phosphoserine is present on Ser-237. The residue at position 248 (Tyr-248) is a Phosphotyrosine; by CSK and TNK2. A disordered region spans residues Asp-275–Ser-294. Tyr-288, Tyr-327, Tyr-338, and Tyr-343 each carry phosphotyrosine; by CSK. Tyr-344 is modified (phosphotyrosine; by CSK and TNK2). Residue Lys-367 forms a Glycyl lysine isopeptide (Lys-Gly) (interchain with G-Cter in SUMO) linkage. Phosphotyrosine; by CSK is present on Tyr-374. Residue Lys-485 forms a Glycyl lysine isopeptide (Lys-Gly) (interchain with G-Cter in SUMO) linkage. Residues Tyr-499 and Tyr-516 each carry the phosphotyrosine; by CSK modification. The interval Tyr-516–Thr-883 is interaction with LPXN. Residues Thr-523–Leu-596 constitute a DNA-binding region (nuclear receptor). 2 NR C4-type zinc fingers span residues Cys-524 to Cys-544 and Cys-560 to Cys-584. The tract at residues Tyr-536–Val-626 is interaction with HIPK3. Residues Gln-556 to Thr-883 are interaction with CCAR1. Residues Met-589–Thr-883 form an interaction with KAT7 region. Ser-615 is subject to Phosphoserine; by STK4/MST1. The NR LBD domain maps to Glu-633–Ile-864. 17beta-hydroxy-5alpha-androstan-3-one is bound by residues Asn-670 and Arg-717. Glycyl lysine isopeptide (Lys-Gly) (interchain with G-Cter in ubiquitin) cross-links involve residues Lys-810 and Lys-812. Thr-842 lines the 17beta-hydroxy-5alpha-androstan-3-one pocket. At Tyr-880 the chain carries Phosphotyrosine; by CSK.

This sequence belongs to the nuclear hormone receptor family. NR3 subfamily. In terms of assembly, binds DNA as a homodimer. Part of a ternary complex containing AR, EFCAB6/DJBP and PARK7. Interacts with HIPK3 and NR0B2 in the presence of androgen. The ligand binding domain interacts with KAT7/HBO1 in the presence of dihydrotestosterone. Interacts with EFCAB6/DJBP, PQBP1, RANBP9, RBAK, SPDEF, SRA1, TGFB1I1 and RREB1. Interacts with ZMIZ1/ZIMP10 and ZMIZ2/ZMIP7 which both enhance its transactivation activity. Interacts with SLC30A9 and RAD54L2/ARIP4. Interacts with MACROD1 (via macro domain). Interacts via the ligand-binding domain with LXXLL and FXXLF motifs from NCOA1, NCOA2, NCOA3 and MAGEA11. Interacts (via nuclear receptor DNA binding domain and nuclear receptor ligand binding domain) with NCOA4. The AR N-terminal poly-Gln region binds Ran resulting in enhancement of AR-mediated transactivation. Ran-binding decreases as the poly-Gln length increases. Interacts with HIP1 (via coiled coil domain). Interacts (via ligand-binding domain) with TRIM68. Interacts with TNK2. Interacts with USP26. Interacts with RNF6. Interacts (regulated by RNF6 probably through polyubiquitination) with RNF14; regulates AR transcriptional activity. Interacts with PRMT2 and TRIM24. Interacts with RACK1. Interacts with RANBP10; this interaction enhances dihydrotestosterone-induced AR transcriptional activity. Interacts with PRPF6 in a hormone-independent way; this interaction enhances dihydrotestosterone-induced AR transcriptional activity. Interacts with STK4/MST1. Interacts with ZIPK/DAPK3. Interacts with LPXN. Interacts with MAK. Part of a complex containing AR, MAK and NCOA3. Interacts with CRY1. Interacts with CCAR1 and GATA2. Interacts with ZNF318. Interacts with BUD31. Interacts with ARID4A. Interacts with ARID4B. Interacts (via NR LBD domain) with ZBTB7A; the interaction is direct and androgen-dependent. Interacts with NCOR1. Interacts with NCOR2. Interacts with CRY2 in a ligand-dependent manner. Post-translationally, phosphorylated in prostate cancer cells in response to several growth factors including EGF. Phosphorylation is induced by c-Src kinase (CSK). Tyr-499 is one of the major phosphorylation sites and an increase in phosphorylation and Src kinase activity is associated with prostate cancer progression. Phosphorylation by TNK2 enhances the DNA-binding and transcriptional activity. Phosphorylation at Ser-61 by CDK9 regulates AR promoter selectivity and cell growth. In terms of processing, sumoylated on Lys-367 (major) and Lys-485. Ubiquitinated. Deubiquitinated by USP26. 'Lys-6' and 'Lys-27'-linked polyubiquitination by RNF6 modulates AR transcriptional activity and specificity. Palmitoylated by ZDHHC7 and ZDHHC21. Palmitoylation is required for plasma membrane targeting and for rapid intracellular signaling via ERK and AKT kinases and cAMP generation.

Its subcellular location is the nucleus. The protein localises to the cytoplasm. Steroid hormone receptors are ligand-activated transcription factors that regulate eukaryotic gene expression and affect cellular proliferation and differentiation in target tissues. Transcription factor activity is modulated by bound coactivator and corepressor proteins like ZBTB7A that recruits NCOR1 and NCOR2 to the androgen response elements/ARE on target genes, negatively regulating androgen receptor signaling and androgen-induced cell proliferation. Transcription activation is also down-regulated by NR0B2. Activated, but not phosphorylated, by HIPK3 and ZIPK/DAPK3. This chain is Androgen receptor (AR), found in Eulemur fulvus collaris (Collared brown lemur).